A 100-amino-acid chain; its full sequence is Aspartyl/glutamyl-tRNA(Asn/Gln) amidotransferase subunit C (100 aa).

It belongs to the GatC family. Heterotrimer of A, B and C subunits.

The catalysed reaction is L-glutamyl-tRNA(Gln) + L-glutamine + ATP + H2O = L-glutaminyl-tRNA(Gln) + L-glutamate + ADP + phosphate + H(+). It catalyses the reaction L-aspartyl-tRNA(Asn) + L-glutamine + ATP + H2O = L-asparaginyl-tRNA(Asn) + L-glutamate + ADP + phosphate + 2 H(+). Functionally, allows the formation of correctly charged Asn-tRNA(Asn) or Gln-tRNA(Gln) through the transamidation of misacylated Asp-tRNA(Asn) or Glu-tRNA(Gln) in organisms which lack either or both of asparaginyl-tRNA or glutaminyl-tRNA synthetases. The reaction takes place in the presence of glutamine and ATP through an activated phospho-Asp-tRNA(Asn) or phospho-Glu-tRNA(Gln). In Streptococcus sanguinis (strain SK36), this protein is Aspartyl/glutamyl-tRNA(Asn/Gln) amidotransferase subunit C.